Consider the following 357-residue polypeptide: UDP-N-acetylglucosamine--N-acetylmuramyl-(pentapeptide) pyrophosphoryl-undecaprenol N-acetylglucosamine transferase (357 aa).

UDP-N-acetyl-alpha-D-glucosamine-binding positions include 12-14, Asn124, Arg162, Ser190, Ile244, 263-268, and Gln289; these read TGG and ALTVAE.

It belongs to the glycosyltransferase 28 family. MurG subfamily.

It localises to the cell inner membrane. It catalyses the reaction di-trans,octa-cis-undecaprenyl diphospho-N-acetyl-alpha-D-muramoyl-L-alanyl-D-glutamyl-meso-2,6-diaminopimeloyl-D-alanyl-D-alanine + UDP-N-acetyl-alpha-D-glucosamine = di-trans,octa-cis-undecaprenyl diphospho-[N-acetyl-alpha-D-glucosaminyl-(1-&gt;4)]-N-acetyl-alpha-D-muramoyl-L-alanyl-D-glutamyl-meso-2,6-diaminopimeloyl-D-alanyl-D-alanine + UDP + H(+). It participates in cell wall biogenesis; peptidoglycan biosynthesis. Functionally, cell wall formation. Catalyzes the transfer of a GlcNAc subunit on undecaprenyl-pyrophosphoryl-MurNAc-pentapeptide (lipid intermediate I) to form undecaprenyl-pyrophosphoryl-MurNAc-(pentapeptide)GlcNAc (lipid intermediate II). The chain is UDP-N-acetylglucosamine--N-acetylmuramyl-(pentapeptide) pyrophosphoryl-undecaprenol N-acetylglucosamine transferase from Alkalilimnicola ehrlichii (strain ATCC BAA-1101 / DSM 17681 / MLHE-1).